Consider the following 306-residue polypeptide: D-alanine--D-alanine ligase (306 aa).

An ATP-grasp domain is found at 101 to 303 (KLVWQALGLP…FSQLVARILM (203 aa)). 134–189 (VAKLGLPLIVKPSHEGSSVGMSKVDHASELQKALVEAFQHDSDVLIEKWLSGPEFT) provides a ligand contact to ATP. Residues Asp-257, Glu-270, and Asn-272 each coordinate Mg(2+).

This sequence belongs to the D-alanine--D-alanine ligase family. Requires Mg(2+) as cofactor. The cofactor is Mn(2+).

The protein localises to the cytoplasm. It catalyses the reaction 2 D-alanine + ATP = D-alanyl-D-alanine + ADP + phosphate + H(+). It functions in the pathway cell wall biogenesis; peptidoglycan biosynthesis. Functionally, cell wall formation. This is D-alanine--D-alanine ligase from Yersinia pseudotuberculosis serotype O:1b (strain IP 31758).